A 173-amino-acid polypeptide reads, in one-letter code: Translation initiation factor IF-3 (173 aa).

This sequence belongs to the IF-3 family. Monomer.

It is found in the cytoplasm. IF-3 binds to the 30S ribosomal subunit and shifts the equilibrium between 70S ribosomes and their 50S and 30S subunits in favor of the free subunits, thus enhancing the availability of 30S subunits on which protein synthesis initiation begins. The chain is Translation initiation factor IF-3 from Methylobacterium sp. (strain 4-46).